Reading from the N-terminus, the 102-residue chain is Large ribosomal subunit protein bL21 (102 aa).

This sequence belongs to the bacterial ribosomal protein bL21 family. In terms of assembly, part of the 50S ribosomal subunit. Contacts protein L20.

In terms of biological role, this protein binds to 23S rRNA in the presence of protein L20. The sequence is that of Large ribosomal subunit protein bL21 from Nitratidesulfovibrio vulgaris (strain DSM 19637 / Miyazaki F) (Desulfovibrio vulgaris).